Here is an 88-residue protein sequence, read N- to C-terminus: Phosphocarrier protein HPr (88 aa).

An HPr domain is found at 1–88; that stretch reads MEQNSYVIID…DVLSKEGLTK (88 aa). H15 functions as the Pros-phosphohistidine intermediate in the catalytic mechanism. Residue S46 is modified to Phosphoserine; by HPrK/P.

The protein localises to the cytoplasm. With respect to regulation, phosphorylation on Ser-46 inhibits the phosphoryl transfer from enzyme I to HPr. Functionally, general (non sugar-specific) component of the phosphoenolpyruvate-dependent sugar phosphotransferase system (sugar PTS). This major carbohydrate active-transport system catalyzes the phosphorylation of incoming sugar substrates concomitantly with their translocation across the cell membrane. The phosphoryl group from phosphoenolpyruvate (PEP) is transferred to the phosphoryl carrier protein HPr by enzyme I. Phospho-HPr then transfers it to the PTS EIIA domain. In terms of biological role, P-Ser-HPr interacts with the catabolite control protein A (CcpA), forming a complex that binds to DNA at the catabolite response elements cre, operator sites preceding a large number of catabolite-regulated genes. Thus, P-Ser-HPr is a corepressor in carbon catabolite repression (CCR), a mechanism that allows bacteria to coordinate and optimize the utilization of available carbon sources. P-Ser-HPr also plays a role in inducer exclusion, in which it probably interacts with several non-PTS permeases and inhibits their transport activity. This is Phosphocarrier protein HPr (ptsH) from Staphylococcus aureus (strain MSSA476).